Here is a 169-residue protein sequence, read N- to C-terminus: Succinate dehydrogenase cytochrome b560 subunit, mitochondrial (169 aa).

A mitochondrion-targeting transit peptide spans 1-29 (MAAFLLRHVSRHCLRAHLNAQLCIRNAAP). Over 30-62 (LGTTAKEEMERFWKKNTSSNRPLSPHLTIYKWS) the chain is Mitochondrial matrix. A helical membrane pass occupies residues 63-92 (LPMALSVCHRGSGIALSGGVSLFGLSALLL). At 93 to 112 (PGNFESYLMFVKSLCLGPTL) the chain is on the mitochondrial intermembrane side. A helical transmembrane segment spans residues 113 to 137 (IYSAKFVLVFPLMYHSLNGIRHLLW). Residue His127 coordinates heme b. At 138–144 (DLGKGLA) the chain is on the mitochondrial matrix side. The helical transmembrane segment at 145–166 (IPQVWLSGVAVVVLAVLSSGGL) threads the bilayer. The Mitochondrial intermembrane segment spans residues 167–169 (AAL).

It belongs to the cytochrome b560 family. In terms of assembly, component of complex II composed of four subunits: the flavoprotein (FP) SDHA, iron-sulfur protein (IP) SDHB, and a cytochrome b560 composed of SDHC and SDHD. Heme b serves as cofactor.

It localises to the mitochondrion inner membrane. Its pathway is carbohydrate metabolism; tricarboxylic acid cycle. Its function is as follows. Membrane-anchoring subunit of succinate dehydrogenase (SDH) that is involved in complex II of the mitochondrial electron transport chain and is responsible for transferring electrons from succinate to ubiquinone (coenzyme Q). SDH also oxidizes malate to the non-canonical enol form of oxaloacetate, enol-oxaloacetate. Enol-oxaloacetate, which is a potent inhibitor of the succinate dehydrogenase activity, is further isomerized into keto-oxaloacetate. The polypeptide is Succinate dehydrogenase cytochrome b560 subunit, mitochondrial (Sdhc) (Mus musculus (Mouse)).